The sequence spans 366 residues: ATP-dependent 6-phosphofructokinase (366 aa).

Residues G16, 78–79, and 118–121 each bind ATP; these read RE and GNGT. The disordered stretch occupies residues 74–94; sequence LGTSREKPFKPDPGEKDSEAG. Positions 77–94 are enriched in basic and acidic residues; the sequence is SREKPFKPDPGEKDSEAG. A Mg(2+)-binding site is contributed by N119. Residues 141-143, R178, 185-187, E238, R282, and 288-291 each bind substrate; these read TID, MGH, and YLQR. Catalysis depends on D143, which acts as the Proton acceptor.

Belongs to the phosphofructokinase type A (PFKA) family. Mixed-substrate PFK group III subfamily. Homodimer or homotetramer. Requires Mg(2+) as cofactor.

Its subcellular location is the cytoplasm. It carries out the reaction beta-D-fructose 6-phosphate + ATP = beta-D-fructose 1,6-bisphosphate + ADP + H(+). It functions in the pathway carbohydrate degradation; glycolysis; D-glyceraldehyde 3-phosphate and glycerone phosphate from D-glucose: step 3/4. Functionally, catalyzes the phosphorylation of D-fructose 6-phosphate to fructose 1,6-bisphosphate by ATP, the first committing step of glycolysis. The protein is ATP-dependent 6-phosphofructokinase of Spirochaeta thermophila (strain ATCC 49972 / DSM 6192 / RI 19.B1).